Consider the following 147-residue polypeptide: MASKRIQKELKDLQKDPPTSCSAGPVGEDMFHWQATIMGPSDSPYAGGVFLVTIHFPPDYPFKPPKVAFRTKVFHPNINSNGSICLDILKDQWSPALTISKVLLSICSLLTDPNPDDPLVPEIAHMYKTDRHKYENTARTWTQRYAM.

Basic and acidic residues predominate over residues 1-15; it reads MASKRIQKELKDLQK. Residues 1-24 are disordered; the sequence is MASKRIQKELKDLQKDPPTSCSAG. The UBC core domain maps to 1–147; that stretch reads MASKRIQKEL…ARTWTQRYAM (147 aa). C85 acts as the Glycyl thioester intermediate in catalysis.

The protein belongs to the ubiquitin-conjugating enzyme family.

It catalyses the reaction S-ubiquitinyl-[E1 ubiquitin-activating enzyme]-L-cysteine + [E2 ubiquitin-conjugating enzyme]-L-cysteine = [E1 ubiquitin-activating enzyme]-L-cysteine + S-ubiquitinyl-[E2 ubiquitin-conjugating enzyme]-L-cysteine.. The protein operates within protein modification; protein ubiquitination. E2 conjugating enzyme that associates with the E3 ubiquitin-protein ligase EL5 to mediate ubiquitination of target proteins. This is Ubiquitin-conjugating enzyme E2 5A (UBC5A) from Oryza sativa subsp. japonica (Rice).